Here is a 63-residue protein sequence, read N- to C-terminus: MSNFWVIALNKNWATLDQVKEAYYYDDVTKEELKEGVDNNLITPEQYQEIVGEAYTSVTLSTE.

The protein is SPbeta prophage-derived uncharacterized protein YomP (yomP) of Bacillus subtilis (strain 168).